Consider the following 944-residue polypeptide: Protein translocase subunit SecA (944 aa).

ATP contacts are provided by residues Gln-77, 95–99 (GEGKT), and Asp-484. The disordered stretch occupies residues 920 to 944 (EQEKQTRKKKKKKPHEDESSKTKIG). Positions 933–944 (PHEDESSKTKIG) are enriched in basic and acidic residues.

This sequence belongs to the SecA family. Monomer and homodimer. Part of the essential Sec protein translocation apparatus which comprises SecA, SecYEG and auxiliary proteins SecDF. Other proteins may also be involved.

Its subcellular location is the cell membrane. It localises to the cytoplasm. The catalysed reaction is ATP + H2O + cellular proteinSide 1 = ADP + phosphate + cellular proteinSide 2.. Its function is as follows. Part of the Sec protein translocase complex. Interacts with the SecYEG preprotein conducting channel. Has a central role in coupling the hydrolysis of ATP to the transfer of proteins into and across the cell membrane, serving as an ATP-driven molecular motor driving the stepwise translocation of polypeptide chains across the membrane. This is Protein translocase subunit SecA from Mycoplasma mycoides subsp. mycoides SC (strain CCUG 32753 / NCTC 10114 / PG1).